The sequence spans 387 residues: Alpha-sarcoglycan (387 aa).

The signal sequence occupies residues 1-23 (MAETLFWTPLLVVLLAGLGDTEA). Topologically, residues 24-290 (QQTTLHPLVG…APDRDFLVDA (267 aa)) are extracellular. N-linked (GlcNAc...) asparagine glycans are attached at residues Asn174 and Asn246. Residues 291–311 (LVTLLVPLLVALLLTLLLAYV) traverse the membrane as a helical segment. At 312 to 387 (MCCRREGRLK…AQVPLILDQH (76 aa)) the chain is on the cytoplasmic side. At Ser377 the chain carries Phosphoserine.

The protein belongs to the sarcoglycan alpha/epsilon family. As to quaternary structure, interacts with the syntrophin SNTA1. Cross-link to form 2 major subcomplexes: one consisting of SGCB, SGCD and SGCG and the other consisting of SGCB and SGCD. The association between SGCB and SGCG is particularly strong while SGCA is loosely associated with the other sarcoglycans. In terms of tissue distribution, most strongly expressed in skeletal muscle. Also expressed in cardiac muscle and, at much lower levels, in lung. In the fetus, most abundant in cardiac muscle and, at lower levels, in lung. Also detected in liver and kidney. Not expressed in brain.

Its subcellular location is the cell membrane. It localises to the sarcolemma. The protein resides in the cytoplasm. The protein localises to the cytoskeleton. Functionally, component of the sarcoglycan complex, a subcomplex of the dystrophin-glycoprotein complex which forms a link between the F-actin cytoskeleton and the extracellular matrix. This is Alpha-sarcoglycan (SGCA) from Homo sapiens (Human).